The chain runs to 265 residues: Glutamate racemase (265 aa).

Residues 12 to 13 (DS) and 44 to 45 (YG) contribute to the substrate site. C75 functions as the Proton donor/acceptor in the catalytic mechanism. 76 to 77 (NT) is a substrate binding site. C186 (proton donor/acceptor) is an active-site residue. Residue 187 to 188 (TH) participates in substrate binding.

This sequence belongs to the aspartate/glutamate racemases family.

The catalysed reaction is L-glutamate = D-glutamate. Its pathway is cell wall biogenesis; peptidoglycan biosynthesis. In terms of biological role, provides the (R)-glutamate required for cell wall biosynthesis. This is Glutamate racemase from Pseudomonas putida (strain ATCC 47054 / DSM 6125 / CFBP 8728 / NCIMB 11950 / KT2440).